A 160-amino-acid polypeptide reads, in one-letter code: Cytochrome b6-f complex subunit 4 (160 aa).

3 helical membrane passes run Leu36–Val56, Leu95–Glu115, and Val131–Ile151.

Belongs to the cytochrome b family. PetD subfamily. As to quaternary structure, the 4 large subunits of the cytochrome b6-f complex are cytochrome b6, subunit IV (17 kDa polypeptide, PetD), cytochrome f and the Rieske protein, while the 4 small subunits are PetG, PetL, PetM and PetN. The complex functions as a dimer.

It is found in the cellular thylakoid membrane. Component of the cytochrome b6-f complex, which mediates electron transfer between photosystem II (PSII) and photosystem I (PSI), cyclic electron flow around PSI, and state transitions. This chain is Cytochrome b6-f complex subunit 4, found in Prochlorococcus marinus (strain MIT 9515).